Here is a 166-residue protein sequence, read N- to C-terminus: Ribonuclease H (166 aa).

The 142-residue stretch at 10 to 151 folds into the RNase H type-1 domain; that stretch reads KRVRVDMFTD…ADELARRGTS (142 aa). 4 residues coordinate Mg(2+): aspartate 19, glutamate 57, aspartate 79, and aspartate 143. A compositionally biased stretch (basic and acidic residues) spans 145–157; the sequence is LARRGTSEARQGK. The interval 145–166 is disordered; sequence LARRGTSEARQGKVDGQSSTIL.

It belongs to the RNase H family. As to quaternary structure, monomer. Mg(2+) is required as a cofactor.

Its subcellular location is the cytoplasm. It catalyses the reaction Endonucleolytic cleavage to 5'-phosphomonoester.. In terms of biological role, endonuclease that specifically degrades the RNA of RNA-DNA hybrids. This is Ribonuclease H from Rhodospirillum rubrum (strain ATCC 11170 / ATH 1.1.1 / DSM 467 / LMG 4362 / NCIMB 8255 / S1).